The sequence spans 632 residues: Extracellular metalloproteinase 1 (632 aa).

Residues M1–A19 form the signal peptide. The propeptide occupies H20–F246. N284 carries N-linked (GlcNAc...) asparagine glycosylation. T430 contributes to the Zn(2+) binding site. The active site involves H431. S434 lines the Zn(2+) pocket. N-linked (GlcNAc...) asparagine glycosylation is present at N591.

It belongs to the peptidase M36 family. Zn(2+) serves as cofactor.

The protein resides in the secreted. PMSF, soybean trypsin inhibitor (SBTI) and chymostatin strongly inhibit the proteinase. Its function is as follows. Secreted metalloproteinase probably acting as a virulence factor. The chain is Extracellular metalloproteinase 1 (MEP1) from Arthroderma otae (Microsporum canis).